We begin with the raw amino-acid sequence, 742 residues long: MELHSRGRHDAPSLSSLSERERRARRARRFCLDYEPVPRKFRRERSPTSPSTRNGAAASEYHLAEDTVGAASHHHRPCVPARRPRYSKDDDTEGDPDHYPPPLPPSSRHALGGTGGHIIMGTAGFRGGHRASSSFKRRVAASASVPLNPHYGKSYDNDDGEPHHHGGDSTHLRRRVPSCPTTFGSSHPSSANNHHGSSAGPQQQQMLALIDDELDAMDEDELQQLSRLIEKKKRARLQRGAASSGTSPSSTSPVYDLQRYTAESLRLAPYPADLKVPTAFPQDHQPRGRILLSHDELMHTDYLLHIRQQFDWLEEPLLRKLVVEKIFAVYNAPNLHTLLAIIDETLSYMKYHHLHGLPVNPHDPYLETVGGMRQLLFNKLNNLDLGCILDHQDGWGDHCSTLKRLVKKPGQMSAWLRDDVCDLQKRPPETFSQPMHRAMAYVCSFSRVAVSLRRRALQVTGTPQFFDQFDTNNAMGTYRCGAVSDLILGALQCHECQNEMCELRIQRALAPYRFMIAYCPFDEQSLLDLTVFAGTTTTTASNHATAGGQQRGGDQIHPTDEQCASMESRTDPATLTAYDKKDREGSHRHPSPMIAAAAPPAQPPSQPQQHYSEGELEEDEDSDDASSQDLVRATDRHGDTVVYKTTAVPPSPPAPLAGVRSHRGELNLMTPSPSHGGSPPQVPHKQPIIPVQSANGNHSTTATQQQQPPPPPPVPQEDDSVVMRCQTPDYEDMLCYSDDMDD.

The segment covering 1 to 11 (MELHSRGRHDA) has biased composition (basic and acidic residues). A disordered region spans residues 1–202 (MELHSRGRHD…NHHGSSAGPQ (202 aa)). The span at 72 to 85 (SHHHRPCVPARRPR) shows a compositional bias: basic residues. The span at 153–171 (KSYDNDDGEPHHHGGDSTH) shows a compositional bias: basic and acidic residues. Over residues 179–202 (CPTTFGSSHPSSANNHHGSSAGPQ) the composition is skewed to polar residues. C387, H494, C496, and C501 together coordinate Zn(2+). The CHC2-type zinc-finger motif lies at 387–501 (CILDHQDGWG…QCHECQNEMC (115 aa)). The segment at 540–742 (ASNHATAGGQ…MLCYSDDMDD (203 aa)) is disordered. The span at 578–587 (YDKKDREGSH) shows a compositional bias: basic and acidic residues. Residues 614–626 (GELEEDEDSDDAS) show a composition bias toward acidic residues. Over residues 692–703 (QSANGNHSTTAT) the composition is skewed to polar residues.

Belongs to the HHV-1 ICP27 protein family. As to quaternary structure, self-associates and forms high-molecular-mass complexes. Interacts with host DDX39A and DDX39B; these interactions are required for UL69 function in mRNA export. Interacts with host SUPT6H, EIF4A1 and PABPC1. In terms of processing, phosphorylated by UL97 and host CDK1, CDK7 and CD9. Phosphorylation by CDKs impacts on UL69 nuclear localization and activity.

It is found in the virion tegument. The protein resides in the virion. It localises to the host nucleus. Its subcellular location is the host cytoplasm. Immediate early (EI) protein that plays many roles during productive infection including regulation of host cell cycle progression, regulation of viral gene expression or nuclear export of intronless viral RNAs. Acts as a transcriptional transactivator via interaction with the cellular transcription elongation factor SUPT6H and as a nuclear RNA export factor via interaction with UAP56, a component of the cellular mRNA export machinery. This chain is mRNA export factor ICP27 homolog, found in Human cytomegalovirus (strain Merlin) (HHV-5).